The primary structure comprises 591 residues: Probable lysosomal cobalamin transporter (591 aa).

The next 5 helical transmembrane spans lie at 8-28 (LIWV…STFV), 39-59 (AAVT…VLLI), 95-115 (IVYY…IPFT), 144-164 (WTLG…FVPF), and 198-218 (FLIT…MALL). The interval 238 to 266 (TASQLETNRERQRQLEGRNEGREGGLDSR) is disordered. The span at 244–266 (TNRERQRQLEGRNEGREGGLDSR) shows a compositional bias: basic and acidic residues. 4 helical membrane-spanning segments follow: residues 315 to 335 (LIGG…MLIT), 378 to 398 (VLFL…IATA), 422 to 442 (MATV…AMVV), and 509 to 529 (FFGI…LIVF).

It belongs to the LIMR family. LMBRD1 subfamily.

The protein localises to the lysosome membrane. Probable lysosomal cobalamin transporter. Required to export cobalamin from lysosomes allowing its conversion to cofactors. This Pyrenophora tritici-repentis (strain Pt-1C-BFP) (Wheat tan spot fungus) protein is Probable lysosomal cobalamin transporter.